Reading from the N-terminus, the 185-residue chain is Ribosome-recycling factor (185 aa).

It belongs to the RRF family.

It is found in the cytoplasm. In terms of biological role, responsible for the release of ribosomes from messenger RNA at the termination of protein biosynthesis. May increase the efficiency of translation by recycling ribosomes from one round of translation to another. This chain is Ribosome-recycling factor, found in Shewanella amazonensis (strain ATCC BAA-1098 / SB2B).